The following is a 304-amino-acid chain: UDP-3-O-acyl-N-acetylglucosamine deacetylase (304 aa).

Positions 78, 237, and 241 each coordinate Zn(2+). Histidine 264 serves as the catalytic Proton donor.

It belongs to the LpxC family. Zn(2+) serves as cofactor.

The enzyme catalyses a UDP-3-O-[(3R)-3-hydroxyacyl]-N-acetyl-alpha-D-glucosamine + H2O = a UDP-3-O-[(3R)-3-hydroxyacyl]-alpha-D-glucosamine + acetate. The protein operates within glycolipid biosynthesis; lipid IV(A) biosynthesis; lipid IV(A) from (3R)-3-hydroxytetradecanoyl-[acyl-carrier-protein] and UDP-N-acetyl-alpha-D-glucosamine: step 2/6. In terms of biological role, catalyzes the hydrolysis of UDP-3-O-myristoyl-N-acetylglucosamine to form UDP-3-O-myristoylglucosamine and acetate, the committed step in lipid A biosynthesis. The protein is UDP-3-O-acyl-N-acetylglucosamine deacetylase of Xylella fastidiosa (strain 9a5c).